A 356-amino-acid polypeptide reads, in one-letter code: Phosphoribosyl pyrophosphate synthase-associated protein 1 (356 aa).

Met1 is modified (N-acetylmethionine). Phosphoserine is present on residues Ser177 and Ser215.

Belongs to the ribose-phosphate pyrophosphokinase family. As to quaternary structure, binds to PRPS1 and PRPS2.

Its function is as follows. Seems to play a negative regulatory role in 5-phosphoribose 1-diphosphate synthesis. This Mus musculus (Mouse) protein is Phosphoribosyl pyrophosphate synthase-associated protein 1 (Prpsap1).